The primary structure comprises 305 residues: Lipoyl synthase (305 aa).

[4Fe-4S] cluster is bound by residues Cys-41, Cys-46, Cys-52, Cys-68, Cys-72, Cys-75, and Ser-281. The Radical SAM core domain maps to 54–270 (GARRTATFMI…RKVAMDKGFK (217 aa)). The span at 283-298 (HADEQVNEAAKEKQRQ) shows a compositional bias: basic and acidic residues. The disordered stretch occupies residues 283-305 (HADEQVNEAAKEKQRQGEAQLNS).

This sequence belongs to the radical SAM superfamily. Lipoyl synthase family. The cofactor is [4Fe-4S] cluster.

Its subcellular location is the cytoplasm. The catalysed reaction is [[Fe-S] cluster scaffold protein carrying a second [4Fe-4S](2+) cluster] + N(6)-octanoyl-L-lysyl-[protein] + 2 oxidized [2Fe-2S]-[ferredoxin] + 2 S-adenosyl-L-methionine + 4 H(+) = [[Fe-S] cluster scaffold protein] + N(6)-[(R)-dihydrolipoyl]-L-lysyl-[protein] + 4 Fe(3+) + 2 hydrogen sulfide + 2 5'-deoxyadenosine + 2 L-methionine + 2 reduced [2Fe-2S]-[ferredoxin]. The protein operates within protein modification; protein lipoylation via endogenous pathway; protein N(6)-(lipoyl)lysine from octanoyl-[acyl-carrier-protein]. Functionally, catalyzes the radical-mediated insertion of two sulfur atoms into the C-6 and C-8 positions of the octanoyl moiety bound to the lipoyl domains of lipoate-dependent enzymes, thereby converting the octanoylated domains into lipoylated derivatives. The polypeptide is Lipoyl synthase (Staphylococcus aureus (strain bovine RF122 / ET3-1)).